Consider the following 104-residue polypeptide: Photosystem II reaction center Psb28 protein (104 aa).

This sequence belongs to the Psb28 family. Part of the photosystem II complex.

The protein resides in the cellular thylakoid membrane. The polypeptide is Photosystem II reaction center Psb28 protein (Synechococcus sp. (strain JA-3-3Ab) (Cyanobacteria bacterium Yellowstone A-Prime)).